The following is an 85-amino-acid chain: MPQKPLKVTKKAKDPRRVTKKQKNLRKAAPLQLKSKKKSLQHLKKLKKSSSLTETTERLVASKVGHLELLRGTRKELEKGKKNSK.

2 disordered regions span residues 1–28 and 35–54; these read MPQKPLKVTKKAKDPRRVTKKQKNLRKA and SKKKSLQHLKKLKKSSSLTE. A compositionally biased stretch (basic residues) spans 35 to 48; sequence SKKKSLQHLKKLKK.

The protein localises to the nucleus. This is an uncharacterized protein from Saccharomyces cerevisiae (strain ATCC 204508 / S288c) (Baker's yeast).